We begin with the raw amino-acid sequence, 162 residues long: RNA pyrophosphohydrolase (162 aa).

Positions 7-149 (KYRPCVGIML…KKEVYKTVIE (143 aa)) constitute a Nudix hydrolase domain. The Nudix box motif lies at 40–61 (GGVDDGEELEQAALRELLEEVG).

Belongs to the Nudix hydrolase family. RppH subfamily. A divalent metal cation serves as cofactor.

Its function is as follows. Accelerates the degradation of transcripts by removing pyrophosphate from the 5'-end of triphosphorylated RNA, leading to a more labile monophosphorylated state that can stimulate subsequent ribonuclease cleavage. The chain is RNA pyrophosphohydrolase from Wolbachia sp. subsp. Drosophila simulans (strain wRi).